Consider the following 79-residue polypeptide: Small ribosomal subunit protein bS18 (79 aa).

The protein belongs to the bacterial ribosomal protein bS18 family. As to quaternary structure, part of the 30S ribosomal subunit. Forms a tight heterodimer with protein bS6.

Its function is as follows. Binds as a heterodimer with protein bS6 to the central domain of the 16S rRNA, where it helps stabilize the platform of the 30S subunit. In Streptococcus pyogenes serotype M5 (strain Manfredo), this protein is Small ribosomal subunit protein bS18.